The chain runs to 318 residues: Transaldolase (318 aa).

K131 acts as the Schiff-base intermediate with substrate in catalysis.

The protein belongs to the transaldolase family. Type 1 subfamily. As to quaternary structure, homodimer.

The protein localises to the cytoplasm. It carries out the reaction D-sedoheptulose 7-phosphate + D-glyceraldehyde 3-phosphate = D-erythrose 4-phosphate + beta-D-fructose 6-phosphate. Its pathway is carbohydrate degradation; pentose phosphate pathway; D-glyceraldehyde 3-phosphate and beta-D-fructose 6-phosphate from D-ribose 5-phosphate and D-xylulose 5-phosphate (non-oxidative stage): step 2/3. Its function is as follows. Transaldolase is important for the balance of metabolites in the pentose-phosphate pathway. This Cellvibrio japonicus (strain Ueda107) (Pseudomonas fluorescens subsp. cellulosa) protein is Transaldolase.